A 589-amino-acid polypeptide reads, in one-letter code: Enhancer of polycomb-like protein 1 (589 aa).

Disordered stretches follow at residues 298–339 (GDED…RPAE), 403–430 (MTPP…PNPP), 468–497 (LPSP…DAPV), and 516–589 (LQTV…QPVS). A compositionally biased stretch (basic and acidic residues) spans 474 to 487 (DLSEEQSDRWKYDQ). A compositionally biased stretch (low complexity) spans 557 to 566 (PQPNQSQSLP). The segment covering 567–589 (LPQPQQPVAQPQPQPQPQAQPVS) has biased composition (pro residues).

This sequence belongs to the enhancer of polycomb family. In terms of assembly, component of the NuA4 histone acetyltransferase complex.

Its subcellular location is the nucleus. In terms of biological role, component of the NuA4 histone acetyltransferase complex which is involved in transcriptional activation of selected genes principally by acetylation of nucleosomal histone H4 and H2A. The NuA4 complex is also involved in DNA repair. Involved in gene silencing by neighboring heterochromatin, blockage of the silencing spreading along the chromosome, and required for cell cycle progression through G2/M. The polypeptide is Enhancer of polycomb-like protein 1 (epl-1) (Neurospora crassa (strain ATCC 24698 / 74-OR23-1A / CBS 708.71 / DSM 1257 / FGSC 987)).